A 570-amino-acid chain; its full sequence is Serine/threonine-protein kinase Pink1, mitochondrial (570 aa).

Residues 1–5 constitute a mitochondrion transit peptide; sequence MSVRA. Over 6–96 the chain is Mitochondrial intermembrane; sequence VGSRLFKHGR…AELRKKATRR (91 aa). A helical membrane pass occupies residues 97 to 120; that stretch reads ILFGDSAPFFALVGVSIASGTGIL. The Cytoplasmic segment spans residues 121-570; it reads TKEEELEGVC…WIQENLPELD (450 aa). Residues 162–484 form the Protein kinase domain; sequence LSLGKPIAKG…VAANVCQLFL (323 aa). Lysine 196 serves as a coordination point for ATP. Serine 205 carries the post-translational modification Phosphoserine; by autocatalysis. Glutamate 217 contacts Mg(2+). Positions 295, 297, and 300 each coordinate ATP. Aspartate 337 serves as the catalytic Proton acceptor. Aspartate 341 contacts ATP. Mg(2+) contacts are provided by asparagine 342 and aspartate 359. Aspartate 359 contacts ATP. Serine 377 is subject to Phosphoserine; by autocatalysis. Residue threonine 386 is modified to Phosphothreonine; by autocatalysis. Position 530 is a phosphothreonine (threonine 530).

The protein belongs to the protein kinase superfamily. Ser/Thr protein kinase family. Requires Mg(2+) as cofactor. Post-translationally, proteolytically cleaved. In healthy cells, the precursor is continuously imported into mitochondria where it is proteolytically cleaved into its short form by the mitochondrial rhomboid protease rho-7 (TcasGA2_TC013516). The short form is then released into the cytosol where it rapidly undergoes proteasome-dependent degradation. In unhealthy cells, when cellular stress conditions lead to the loss of mitochondrial membrane potential, mitochondrial import is impaired leading to the precursor accumulating on the outer mitochondrial membrane (OMM). Autophosphorylated on Ser-205, which activates kinase activity and is required for substrate recognition. Loss of mitochondrial membrane potential results in the precursor accumulating on the outer mitochondrial membrane (OMM) where it is activated by autophosphorylation at Ser-205. Autophosphorylation is sufficient and essential for selective recruitment of park to depolarized mitochondria, likely via Pink1-dependent phosphorylation of polyubiquitin chains. Also autophosphorylated at Ser-377, Thr-386 and possibly Thr-530. Another report found evidence of autophosphorylation at Ser-154, Thr-186, Thr-218, Ser-267 and Thr-530, as well as a number of other minor sites, but determined that phosphorylation at these sites is not required for enzyme activity and may not occur in vivo.

It is found in the mitochondrion outer membrane. The protein localises to the mitochondrion inner membrane. Its subcellular location is the cytoplasm. It localises to the cytosol. The enzyme catalyses L-seryl-[protein] + ATP = O-phospho-L-seryl-[protein] + ADP + H(+). It carries out the reaction L-threonyl-[protein] + ATP = O-phospho-L-threonyl-[protein] + ADP + H(+). Functionally, acts as a serine/threonine-protein kinase. Exhibits a substrate preference for proline at position P+1 and a general preference at several residues for basic residues such as arginine. Also exhibits moderate preferences for a phosphotyrosine at position P-3 and a tryptophan at P-5. Critical to mitochondrial homeostasis it mediates several pathways that maintain mitochondrial health and function. Protects against mitochondrial dysfunction during cellular stress by phosphorylating mitochondrial proteins such as park and likely Drp1, to coordinate mitochondrial quality control mechanisms that remove and replace dysfunctional mitochondrial components. Depending on the severity of mitochondrial damage and/or dysfunction, activity ranges from preventing apoptosis and stimulating mitochondrial biogenesis to regulating mitochondrial dynamics and eliminating severely damaged mitochondria via mitophagy. Appears to be particularly important in maintaining the physiology and function of cells with high energy demands that are undergoing stress or altered metabolic environment, including spermatids, muscle cells and neurons such as the dopaminergic (DA) neurons. Mediates the translocation and activation of park at the outer membrane (OMM) of dysfunctional/depolarized mitochondria. At the OMM of damaged mitochondria, phosphorylates pre-existing polyubiquitin chains, the Pink1-phosphorylated polyubiquitin then recruits park from the cytosol to the OMM where park is fully activated by phosphorylation at 'Ser-80' by Pink1. When cellular stress results in irreversible mitochondrial damage, functions with park to promote the clearance of dysfunctional and/or depolarized mitochondria by selective autophagy (mitophagy). The Pink1-park pathway also promotes fission and/or inhibits fusion of damaged mitochondria, by phosphorylating and thus promoting the park-dependent degradation of proteins involved in mitochondrial fusion/fission such as Marf, Opa1 and fzo. This prevents the refusion of unhealthy mitochondria with the mitochondrial network or initiates mitochondrial fragmentation facilitating their later engulfment by autophagosomes. Also likely to promote mitochondrial fission independently of park and Atg7-mediated mitophagy, via the phosphorylation and activation of Drp1. Regulates motility of damaged mitochondria by phosphorylating Miro which likely promotes its park-dependent degradation by the proteasome; in motor neurons, this inhibits mitochondrial intracellular anterograde transport along the axons which probably increases the chance of the mitochondria being eliminated in the soma. The Pink1-park pathway is also involved in mitochondrial regeneration processes such as promoting mitochondrial biogenesis, activating localized mitochondrial repair, promoting selective turnover of mitochondrial proteins and initiating the mitochondrial import of endogenous proteins. Involved in mitochondrial biogenesis by promoting the park-dependent ubiquitination of transcriptional repressor Paris which leads to its subsequent proteasomal degradation and allows activation of the transcription factor srl. Functions with park to promote localized mitochondrial repair by activating the translation of specific nuclear-encoded mitochondrial RNAs (nc-mtRNAs) on the mitochondrial surface, including several key electron transport chain component nc-mtRNAs. During oogenesis, phosphorylates and inactivates larp on the membrane of defective mitochondria, thus impairing local translation and mtDNA replication and consequently, reducing transmission of deleterious mtDNA mutations to the mature oocyte. Phosphorylates the mitochondrial acyl-CoA dehydrogenase Mcad, and appears to be important for maintaining fatty acid and amino acid metabolism via a mechanism that is independent of it's role in maintaining production of ATP. This chain is Serine/threonine-protein kinase Pink1, mitochondrial, found in Tribolium castaneum (Red flour beetle).